Reading from the N-terminus, the 632-residue chain is Phosphomethylpyrimidine synthase (632 aa).

Residues asparagine 237, methionine 266, tyrosine 295, histidine 331, 351–353 (SRG), 392–395 (DGLR), and glutamate 431 contribute to the substrate site. Zn(2+) is bound at residue histidine 435. Residue tyrosine 458 coordinates substrate. Zn(2+) is bound at residue histidine 499. Residues cysteine 579, cysteine 582, and cysteine 587 each contribute to the [4Fe-4S] cluster site.

It belongs to the ThiC family. Homodimer. Requires [4Fe-4S] cluster as cofactor.

The catalysed reaction is 5-amino-1-(5-phospho-beta-D-ribosyl)imidazole + S-adenosyl-L-methionine = 4-amino-2-methyl-5-(phosphooxymethyl)pyrimidine + CO + 5'-deoxyadenosine + formate + L-methionine + 3 H(+). It functions in the pathway cofactor biosynthesis; thiamine diphosphate biosynthesis. Catalyzes the synthesis of the hydroxymethylpyrimidine phosphate (HMP-P) moiety of thiamine from aminoimidazole ribotide (AIR) in a radical S-adenosyl-L-methionine (SAM)-dependent reaction. This Chromobacterium violaceum (strain ATCC 12472 / DSM 30191 / JCM 1249 / CCUG 213 / NBRC 12614 / NCIMB 9131 / NCTC 9757 / MK) protein is Phosphomethylpyrimidine synthase.